The sequence spans 281 residues: Polyamine aminopropyltransferase (281 aa).

In terms of domain architecture, PABS spans 2-236; the sequence is DLWLKEGQIS…GYWSFTIGSK (235 aa). Gln31 is a binding site for S-methyl-5'-thioadenosine. Residues His62 and Asp86 each coordinate spermidine. S-methyl-5'-thioadenosine is bound by residues Glu106 and 138–139; that span reads DG. The active-site Proton acceptor is the Asp156. 156 to 159 is a spermidine binding site; the sequence is DSTD.

This sequence belongs to the spermidine/spermine synthase family. Homodimer or homotetramer.

Its subcellular location is the cytoplasm. It carries out the reaction S-adenosyl 3-(methylsulfanyl)propylamine + putrescine = S-methyl-5'-thioadenosine + spermidine + H(+). The protein operates within amine and polyamine biosynthesis; spermidine biosynthesis; spermidine from putrescine: step 1/1. Functionally, catalyzes the irreversible transfer of a propylamine group from the amino donor S-adenosylmethioninamine (decarboxy-AdoMet) to putrescine (1,4-diaminobutane) to yield spermidine. The polypeptide is Polyamine aminopropyltransferase (Clostridium tetani (strain Massachusetts / E88)).